The following is a 339-amino-acid chain: Uroporphyrinogen decarboxylase (339 aa).

Residues 23–27 (RQAGR), Asp72, Tyr147, Thr202, and His315 each bind substrate.

It belongs to the uroporphyrinogen decarboxylase family. Homodimer.

It localises to the cytoplasm. It catalyses the reaction uroporphyrinogen III + 4 H(+) = coproporphyrinogen III + 4 CO2. The protein operates within porphyrin-containing compound metabolism; protoporphyrin-IX biosynthesis; coproporphyrinogen-III from 5-aminolevulinate: step 4/4. Functionally, catalyzes the decarboxylation of four acetate groups of uroporphyrinogen-III to yield coproporphyrinogen-III. The protein is Uroporphyrinogen decarboxylase of Geobacter sp. (strain M21).